Reading from the N-terminus, the 1648-residue chain is Homeostatic regulator of DAG (1648 aa).

One can recognise a DMAP1-binding domain in the interval I5–S101. N-linked (GlcNAc...) asparagine glycans are attached at residues N28, N71, and N98. Disordered stretches follow at residues P52–S73 and T96–S130. Residues N60–N71 are compositionally biased toward basic residues. Composition is skewed to polar residues over residues T96–T105 and Y113–N128. S99 is subject to Phosphoserine. 3 N-linked (GlcNAc...) asparagine glycosylation sites follow: N128, N151, and N209. Positions A158 to L893 are fatty acyl-AMP ligase-like domain 1. A helical membrane pass occupies residues V228–V248. N-linked (GlcNAc...) asparagine glycans are attached at residues N288, N328, N575, N644, and N730. S751 carries the post-translational modification Phosphoserine. N-linked (GlcNAc...) asparagine glycosylation is found at N881, N917, N995, and N1009. The fatty acyl-AMP ligase-like domain 2 stretch occupies residues V950–I1648. A helical transmembrane segment spans residues Y1061–V1081. The N-linked (GlcNAc...) asparagine glycan is linked to N1198. Residues G1224–F1244 traverse the membrane as a helical segment. N-linked (GlcNAc...) asparagine glycans are attached at residues N1301, N1302, N1447, N1472, N1488, N1565, N1597, and N1634.

It is found in the vacuole membrane. The protein localises to the mitochondrion membrane. Homeostatic regulator of a chemically distinct subset of diacylglycerols (DAGs) with C36 chain length that prevents the toxic accumulation of these specific DAGs in the logarithmic growth phase, which otherwise leads to endoplasmic reticulum stress. Maintains the basal level of DAG subspecies by directly facilitating DAG to triacylglycerol (TAG) conversion process, possibly via adenylation activity of its FLD domains. Does not affect the abundant DAG species (representing over 90% of total DAG pool), comprised of C32 and C34 chain lengths. Required for vacuole fusion-mediated osmoadaptation. This chain is Homeostatic regulator of DAG, found in Saccharomyces cerevisiae (strain ATCC 204508 / S288c) (Baker's yeast).